A 903-amino-acid chain; its full sequence is Immunoglobulin superfamily member 22 (903 aa).

Ig-like domains lie at Pro-67–Thr-158, Glu-232–Thr-322, Pro-418–Thr-508, and Pro-606–Ser-696. Fibronectin type-III domains are found at residues Phe-703–Pro-798 and Leu-804–Pro-898.

The protein is Immunoglobulin superfamily member 22 (IGSF22) of Homo sapiens (Human).